The following is a 174-amino-acid chain: Translationally-controlled tumor protein homolog 1 (174 aa).

The TCTP domain occupies 1-174; the sequence is MRVFKDIVGY…FKDGLESVKY (174 aa).

It belongs to the TCTP family.

The protein resides in the cytoplasm. Involved in calcium binding and microtubule stabilization. This is Translationally-controlled tumor protein homolog 1 from Dictyostelium discoideum (Social amoeba).